The following is a 92-amino-acid chain: YcgL domain-containing protein SO_2575 (92 aa).

The 85-residue stretch at 1 to 85 (MLCAVYKSSR…PQVNLLAEHR (85 aa)) folds into the YcgL domain.

This Shewanella oneidensis (strain ATCC 700550 / JCM 31522 / CIP 106686 / LMG 19005 / NCIMB 14063 / MR-1) protein is YcgL domain-containing protein SO_2575.